A 95-amino-acid chain; its full sequence is Co-chaperonin GroES (95 aa).

This sequence belongs to the GroES chaperonin family. In terms of assembly, heptamer of 7 subunits arranged in a ring. Interacts with the chaperonin GroEL.

Its subcellular location is the cytoplasm. Functionally, together with the chaperonin GroEL, plays an essential role in assisting protein folding. The GroEL-GroES system forms a nano-cage that allows encapsulation of the non-native substrate proteins and provides a physical environment optimized to promote and accelerate protein folding. GroES binds to the apical surface of the GroEL ring, thereby capping the opening of the GroEL channel. This chain is Co-chaperonin GroES, found in Nitratidesulfovibrio vulgaris (strain ATCC 29579 / DSM 644 / CCUG 34227 / NCIMB 8303 / VKM B-1760 / Hildenborough) (Desulfovibrio vulgaris).